The sequence spans 425 residues: Dihydroorotase (425 aa).

Residues His56 and His58 each coordinate Zn(2+). Substrate contacts are provided by residues 58–60 (HYR) and Asn90. 3 residues coordinate Zn(2+): Asp148, His175, and His228. A substrate-binding site is contributed by Asn274. Asp301 lines the Zn(2+) pocket. Asp301 is a catalytic residue. Substrate-binding positions include His305 and 319-320 (FG).

This sequence belongs to the metallo-dependent hydrolases superfamily. DHOase family. Class I DHOase subfamily. It depends on Zn(2+) as a cofactor.

The enzyme catalyses (S)-dihydroorotate + H2O = N-carbamoyl-L-aspartate + H(+). The protein operates within pyrimidine metabolism; UMP biosynthesis via de novo pathway; (S)-dihydroorotate from bicarbonate: step 3/3. Its function is as follows. Catalyzes the reversible cyclization of carbamoyl aspartate to dihydroorotate. The protein is Dihydroorotase of Lactobacillus delbrueckii subsp. bulgaricus (strain ATCC 11842 / DSM 20081 / BCRC 10696 / JCM 1002 / NBRC 13953 / NCIMB 11778 / NCTC 12712 / WDCM 00102 / Lb 14).